The primary structure comprises 510 residues: Mitochondrial metal transporter 1 (510 aa).

The segment at 120–141 (ADKPSSLNLHSHTHSHGHTHSH) is disordered. Positions 130–141 (SHTHSHGHTHSH) are enriched in basic residues. Transmembrane regions (helical) follow at residues 165 to 185 (WVGL…GIVF), 194 to 214 (AIHA…VGLA), 241 to 261 (LAMA…GPVI), 286 to 306 (VTDI…EWIF), 333 to 353 (LTSL…IQSL), and 356 to 376 (IGGL…MCIA).

Belongs to the cation diffusion facilitator (CDF) transporter (TC 2.A.4) family. SLC30A subfamily.

The protein resides in the mitochondrion membrane. Functionally, mitochondrial metal transporter involved in mitochondrial iron accumulation. This Saccharomyces cerevisiae (strain ATCC 204508 / S288c) (Baker's yeast) protein is Mitochondrial metal transporter 1 (MMT1).